The primary structure comprises 316 residues: Golgi to ER traffic protein 2 (316 aa).

Positions 1 to 75 (MATELSDAEK…SDEEVEKSTK (75 aa)) are disordered. Residues 1 to 167 (MATELSDAEK…LKYYKFKVSK (167 aa)) are Cytoplasmic-facing. The span at 7-19 (DAEKRKLLRERRQ) shows a compositional bias: basic and acidic residues. Composition is skewed to polar residues over residues 22-48 (FSNGGASSRLNKITGQQQNSFLSSTSV) and 56-65 (PSGNKKSSNV). Residues 168-187 (LKSYIILIKWALLAPYVYFI) form a helical membrane-spanning segment. At 188-209 (MHPNPTVLQASNLLSQIVERSN) the chain is on the lumenal side. A helical membrane pass occupies residues 210-229 (FFSIFTGLEIVFISIYYQML). The Cytoplasmic segment spans residues 230-276 (KKLQRDNNVTATQNAGGILKYLTMIPEGILPIRNIQGKIGLALEYFD). The chain crosses the membrane as a helical span at residues 277–297 (VASMYVTDICFVLVLFGVMKY). The Lumenal portion of the chain corresponds to 298–316 (YHSSFPISVPIEPPIAGIQ).

It belongs to the GET2 family. In terms of assembly, component of the Golgi to ER traffic (GET) complex, which is composed of GET1, GET2 and GET3. Within the complex, GET1 and GET2 form a heterotetramer which is stabilized by phosphatidylinositol binding and which binds to the GET3 homodimer.

Its subcellular location is the endoplasmic reticulum membrane. It localises to the golgi apparatus membrane. Functionally, required for the post-translational delivery of tail-anchored (TA) proteins to the endoplasmic reticulum. Together with GET1, acts as a membrane receptor for soluble GET3, which recognizes and selectively binds the transmembrane domain of TA proteins in the cytosol. The GET complex cooperates with the HDEL receptor ERD2 to mediate the ATP-dependent retrieval of resident ER proteins that contain a C-terminal H-D-E-L retention signal from the Golgi to the ER. This is Golgi to ER traffic protein 2 from Kluyveromyces lactis (strain ATCC 8585 / CBS 2359 / DSM 70799 / NBRC 1267 / NRRL Y-1140 / WM37) (Yeast).